The primary structure comprises 524 residues: mRNA cap guanine-N(7) methyltransferase (524 aa).

The segment at 1 to 155 is disordered; sequence MSDKEAGVAS…DKKRAHDEAE (155 aa). Residues 19 to 40 are compositionally biased toward basic and acidic residues; it reads NKDEVDVKNTEEHSKQESKSDI. The span at 68–77 shows a compositional bias: polar residues; sequence NNKVISSVYN. Positions 90-99 are enriched in basic and acidic residues; it reads KTTDKYDKYG. A compositionally biased stretch (polar residues) spans 100-112; the sequence is SRSTPIATPTAPV. The mRNA cap 0 methyltransferase domain occupies 214-522; it reads SPIYKLRNFN…FYIGFVFEKL (309 aa). 223–224 contacts mRNA; sequence NN. Positions 227, 251, 273, 319, 349, and 354 each coordinate S-adenosyl-L-methionine.

This sequence belongs to the class I-like SAM-binding methyltransferase superfamily. mRNA cap 0 methyltransferase family.

It is found in the nucleus. It carries out the reaction a 5'-end (5'-triphosphoguanosine)-ribonucleoside in mRNA + S-adenosyl-L-methionine = a 5'-end (N(7)-methyl 5'-triphosphoguanosine)-ribonucleoside in mRNA + S-adenosyl-L-homocysteine. Its function is as follows. Responsible for methylating the 5'-cap structure of mRNAs. The polypeptide is mRNA cap guanine-N(7) methyltransferase (ABD1) (Debaryomyces hansenii (strain ATCC 36239 / CBS 767 / BCRC 21394 / JCM 1990 / NBRC 0083 / IGC 2968) (Yeast)).